Consider the following 153-residue polypeptide: Arginine repressor (153 aa).

It belongs to the ArgR family.

The protein localises to the cytoplasm. The protein operates within amino-acid biosynthesis; L-arginine biosynthesis [regulation]. Functionally, regulates arginine biosynthesis genes. The chain is Arginine repressor from Glaesserella parasuis serovar 5 (strain SH0165) (Haemophilus parasuis).